Here is a 442-residue protein sequence, read N- to C-terminus: Probable diguanylate cyclase DgcI (442 aa).

A signal peptide spans Met-1–Ala-23. Cys-24 carries N-palmitoyl cysteine lipidation. Residue Cys-24 is the site of S-diacylglycerol cysteine attachment. A helical transmembrane segment spans residues Leu-231–Val-251. The GGDEF domain occupies Lys-319–Gln-442. Position 327 (Asp-327) interacts with Mg(2+). The substrate site is built by Asn-335, His-340, and Asp-344. Asp-371 contributes to the Mg(2+) binding site.

Homodimer. It depends on Mg(2+) as a cofactor.

It is found in the cell membrane. The enzyme catalyses 2 GTP = 3',3'-c-di-GMP + 2 diphosphate. The protein operates within purine metabolism; 3',5'-cyclic di-GMP biosynthesis. Functionally, catalyzes the synthesis of cyclic-di-GMP (c-di-GMP) via the condensation of 2 GTP molecules. This chain is Probable diguanylate cyclase DgcI, found in Escherichia coli (strain K12).